The chain runs to 598 residues: Membrane protein insertase YidC (598 aa).

The helical transmembrane segment at 7 to 27 (NYFIAIALSVLIVLGWQFLYM) threads the bilayer. A disordered region spans residues 37 to 71 (AQEAQKAQQQTEQVQQPAAGGATPAPASGTAPSGQ). Low complexity predominate over residues 40–71 (AQKAQQQTEQVQQPAAGGATPAPASGTAPSGQ). The next 4 helical transmembrane spans lie at 373 to 393 (FFGN…ALFF), 447 to 467 (WPVA…YITI), 492 to 512 (LFGL…WPLI), and 538 to 558 (WMPL…VIYW).

The protein belongs to the OXA1/ALB3/YidC family. Type 1 subfamily. Interacts with the Sec translocase complex via SecD. Specifically interacts with transmembrane segments of nascent integral membrane proteins during membrane integration.

It is found in the cell inner membrane. Required for the insertion and/or proper folding and/or complex formation of integral membrane proteins into the membrane. Involved in integration of membrane proteins that insert both dependently and independently of the Sec translocase complex, as well as at least some lipoproteins. Aids folding of multispanning membrane proteins. This Rhizobium etli (strain CIAT 652) protein is Membrane protein insertase YidC.